Consider the following 400-residue polypeptide: Phosphoglycerate kinase (400 aa).

Substrate-binding positions include 23–25 (DLN), Arg-38, 61–64 (HFGR), Arg-120, and Arg-153. Residues Lys-203, Glu-325, and 355–358 (GGDT) contribute to the ATP site.

Belongs to the phosphoglycerate kinase family. In terms of assembly, monomer.

Its subcellular location is the cytoplasm. It carries out the reaction (2R)-3-phosphoglycerate + ATP = (2R)-3-phospho-glyceroyl phosphate + ADP. It participates in carbohydrate degradation; glycolysis; pyruvate from D-glyceraldehyde 3-phosphate: step 2/5. The sequence is that of Phosphoglycerate kinase from Methylorubrum populi (strain ATCC BAA-705 / NCIMB 13946 / BJ001) (Methylobacterium populi).